Reading from the N-terminus, the 121-residue chain is MQDTIFLKGMRFYGYHGALSAENEIGQIFKVDVTLKVDLSEAGRTDNVIDTVHYGEVFEEVKSIMEGKAVNLLEHLAERIANRINSQYNRVMETKVRITKENPPIPGHYDGVGIEIVRENK.

Residues glutamate 22, tyrosine 54, and 73–74 (LE) contribute to the substrate site. Residue lysine 100 is the Proton donor/acceptor of the active site.

Belongs to the DHNA family. As to quaternary structure, homooctamer. Four molecules assemble into a ring, and two rings come together to give a cylinder with a hole of at least 13 a diameter.

The catalysed reaction is 7,8-dihydroneopterin = 6-hydroxymethyl-7,8-dihydropterin + glycolaldehyde. The enzyme catalyses 7,8-dihydroneopterin = 7,8-dihydromonapterin. It functions in the pathway cofactor biosynthesis; tetrahydrofolate biosynthesis; 2-amino-4-hydroxy-6-hydroxymethyl-7,8-dihydropteridine diphosphate from 7,8-dihydroneopterin triphosphate: step 3/4. Its function is as follows. Catalyzes the conversion of 7,8-dihydroneopterin to 6-hydroxymethyl-7,8-dihydropterin. Can also catalyze the epimerization of carbon 2' of dihydroneopterin to dihydromonapterin. The chain is Dihydroneopterin aldolase (folB) from Staphylococcus aureus (strain MRSA252).